Reading from the N-terminus, the 813-residue chain is Leucine--tRNA ligase (813 aa).

The 'HIGH' region motif lies at 41–51 (PYPSGTLHMGH). The 'KMSKS' region signature appears at 575–579 (KMSKS). Lys-578 is a binding site for ATP.

The protein belongs to the class-I aminoacyl-tRNA synthetase family.

It is found in the cytoplasm. The catalysed reaction is tRNA(Leu) + L-leucine + ATP = L-leucyl-tRNA(Leu) + AMP + diphosphate. The protein is Leucine--tRNA ligase of Francisella philomiragia subsp. philomiragia (strain ATCC 25017 / CCUG 19701 / FSC 153 / O#319-036).